A 282-amino-acid chain; its full sequence is Serine/arginine-rich splicing factor 8 (282 aa).

The residue at position 2 (Ser2) is an N-acetylserine. A phosphoserine mark is found at Ser2 and Ser26. Residues 14 to 92 enclose the RRM domain; it reads ITLKVDNLTY…RELRVQVARY (79 aa). A disordered region spans residues 91–282; that stretch reads RYGRRDLPRS…SPEEEGQMSS (192 aa). Over residues 93–107 the composition is skewed to basic and acidic residues; the sequence is GRRDLPRSRQGEPRG. Composition is skewed to basic residues over residues 116 to 136 and 144 to 154; these read RRSR…RSRS and SRSRSRYRGSR. Low complexity-rich tracts occupy residues 155–177 and 185–200; these read YSRS…PYSR and YGGS…NSRY. Phosphoserine occurs at positions 156, 158, 171, 173, and 196. Positions 201–210 are enriched in basic residues; sequence SRYHSSRSHS. Low complexity-rich tracts occupy residues 211-227 and 234-255; these read KSGS…SKSS and SSSV…SPPR. Basic residues predominate over residues 256-271; that stretch reads VSKRKSKSRSRSKRPP. The residue at position 273 (Ser273) is a Phosphoserine.

This sequence belongs to the splicing factor SR family. As to expression, strongly expressed in pancreas, spleen and prostate. Weakly expressed in lung, liver and thymus.

Its subcellular location is the nucleus. Its function is as follows. Involved in pre-mRNA alternative splicing. The chain is Serine/arginine-rich splicing factor 8 (SRSF8) from Homo sapiens (Human).